The sequence spans 519 residues: Iroquois-class homeodomain protein IRX-4 (519 aa).

The segment at residues 143-204 (GTRRKNATRE…NARRRLKKEN (62 aa)) is a DNA-binding region (homeobox; TALE-type). Residues 204-298 (NKMTWPPRNK…VPAAPDGPVK (95 aa)) form a disordered region. Basic and acidic residues predominate over residues 213–222 (KCADEKRPYA). 2 stretches are compositionally biased toward acidic residues: residues 223 to 235 (EGEEEEGGEEEAR) and 257 to 267 (LSDLDDFDPLE).

This sequence belongs to the TALE/IRO homeobox family. As to quaternary structure, interacts with the vitamin D receptor VDR but doesn't affect its transactivation activity. As to expression, predominantly expressed in cardiac ventricles.

Its subcellular location is the nucleus. In terms of biological role, likely to be an important mediator of ventricular differentiation during cardiac development. This chain is Iroquois-class homeodomain protein IRX-4 (IRX4), found in Homo sapiens (Human).